Here is a 157-residue protein sequence, read N- to C-terminus: Neutrophil recruitment protein (157 aa).

The first 19 residues, 1–19 (MCSIWLTFFLSFLILNTKA), serve as a signal peptide directing secretion.

The protein belongs to the PBP/GOBP family. In terms of assembly, interacts with mouse TLR1; the interaction promotes activation of canonical NF-kappa-B signaling in host macrophages. Interacts with human TLR1. Interacts with mouse TLR4; the interaction promotes activation of canonical NF-kappa-B signaling in host macrophages. Interacts with human TLR4. Female salivary gland (at protein level).

The protein resides in the secreted. In terms of biological role, activates MyD88-dependent canonical NF-kappa-B signaling in host macrophages via interaction with host TLR1 and TLR4; this drives the expression of neutrophil chemoattractants, followed by the subsequent influx of neutrophils and recruitment of myeloid cells at the bite site. Functionally, (Microbial infection) Promotes Zika virus infection in mouse model by facilitating recruitment of flavivirus-permissive myeloid cells at the bite site. Its function is as follows. (Microbial infection) Promotes dengue virus infection in mouse model by facilitating recruitment of flavivirus-permissive myeloid cells at the bite site. This Aedes aegypti (Yellowfever mosquito) protein is Neutrophil recruitment protein.